The following is a 53-amino-acid chain: Small polypeptide DEVIL 16 (53 aa).

An N-linked (GlcNAc...) asparagine glycan is attached at asparagine 6. A required for DVL/RTFL small polypeptide activity region spans residues 14 to 45 (TFGQKCSHVVKKQRAKFYILRRCIAMLVCWHD). The helical transmembrane segment at 30–46 (FYILRRCIAMLVCWHDQ) threads the bilayer.

It belongs to the DVL/RTFL small polypeptides family. In terms of tissue distribution, mostly expressed in stems, flower buds, flowers and seedling shoots, to a lesser extent, in roots and young cauline leaves, but not in mature rosette leaves. Barely observed in cotyledons and leaf primordia.

It localises to the cell membrane. Functionally, small polypeptide acting as a regulatory molecule which coordinates cellular responses required for differentiation, growth and development, probably by restricting polar cell proliferation in lateral organs (e.g. leaves) and coordinating socket cell recruitment and differentiation at trichome sites. Regulates the positional cue and cell proliferation along the body axis. The sequence is that of Small polypeptide DEVIL 16 from Arabidopsis thaliana (Mouse-ear cress).